A 396-amino-acid polypeptide reads, in one-letter code: Probable sugar efflux transporter (396 aa).

The next 12 helical transmembrane spans lie at 15-35 (VVTLAIAAFIFNTTEFVPVGL), 50-70 (VGIMLTIYAWVVAVMSLPFML), 81-101 (LICLFVLFIASHVLSFLAWNF), 103-123 (VLVISRIGIAFAHAIFWSITA), 136-156 (AQALSLIATGTALAMVLGLPI), 169-189 (TFFAIGMGALITLLCLIKLLP), 202-222 (LPLLFRCPALMSLYVLTVVVV), 246-266 (FATVLLLLLGGAGIIGSLVFG), 275-295 (SLVSIAIALLVVCLLLLLPAA), 301-321 (LAILSIFWGIAIMVIGLGMQV), 333-353 (VAMALFSGIFNIGIGAGALVG), and 364-384 (AIGYIGAIPACAALVWAVLIF).

It belongs to the major facilitator superfamily. SotB (TC 2.A.1.2) family.

Its subcellular location is the cell inner membrane. Its function is as follows. Involved in the efflux of sugars. The physiological role may be the reduction of the intracellular concentration of toxic sugars or sugar metabolites. In Salmonella paratyphi A (strain ATCC 9150 / SARB42), this protein is Probable sugar efflux transporter.